Reading from the N-terminus, the 503-residue chain is Efflux pump vrtL (503 aa).

The disordered stretch occupies residues 1–59 (MSKLSDNHSSASEGEKEAGDLESGPTAISSEPSFDDADRDPNLITWDGPKDPENPKNWP). The N-linked (GlcNAc...) asparagine glycan is linked to Asn7. 12 consecutive transmembrane segments (helical) span residues 68–88 (WTVSLFVFISPVSSSMIAPAM), 101–121 (IEIYLSLSIFILAYSIGPIFF), 133–153 (LLQISNVWYLAWNLGCGFATT), 162–182 (FLAGIGGSAPLAIGGGAISDM), 194–214 (VYTLGPLLGPVVGPIAGGFIA), 221–241 (WVFWSTSAAALAVQVVGFFWL), 295–315 (IVFCMAIYMAYLFGISYLMFA), 329–349 (PGIGGLNYLSIAIGSFIGLFF), 377–397 (SLAVGSVISTIGLFWYGWSIG), 401–421 (WIMPNIGALIFAMGTISCLQG), 432–454 (TYAASAMAACAVLRSLCGFGFPL), and 471–491 (LLAFITMVVGWGAPFAFWHFG).

It belongs to the major facilitator superfamily.

It is found in the membrane. Functionally, efflux pump; part of the gene cluster that mediates the biosynthesis of viridicatumtoxin, a tetracycline-like fungal meroterpenoid with a unique, fused spirobicyclic ring system. The sequence is that of Efflux pump vrtL from Penicillium aethiopicum.